Here is a 1604-residue protein sequence, read N- to C-terminus: Collagen alpha-1(XVI) chain (1604 aa).

The first 21 residues, Met-1 to Gly-21, serve as a signal peptide directing secretion. Asn-47 is a glycosylation site (N-linked (GlcNAc...) asparagine). The Laminin G-like domain maps to Gly-50–Pro-231. A nonhelical region 10 (NC10) region spans residues Glu-232–Glu-374. The segment covering Ala-301 to Thr-311 has biased composition (basic and acidic residues). Residues Ala-301–Val-509 form a disordered region. Residue Asn-327 is glycosylated (N-linked (GlcNAc...) asparagine). In terms of domain architecture, Collagen-like 1 spans Gly-375–Gly-423. The segment at Gly-375 to Pro-506 is triple-helical region 9 (COL9) with 3 imperfections. Residues Ser-383–Glu-397 are compositionally biased toward low complexity. Residues Lys-398 to Gly-407 show a composition bias toward basic and acidic residues. Over residues Pro-449 to Ile-460 the composition is skewed to pro residues. Residues Gly-486–Gly-495 are compositionally biased toward gly residues. The segment at Cys-507 to Val-521 is nonhelical region 9 (NC9). Residues Gly-522–Pro-555 form a triple-helical region 8 (COL8) with 1 imperfection region. Positions Arg-540–Asp-542 match the Cell attachment site motif. The nonhelical region 8 (NC8) stretch occupies residues Cys-556 to Thr-572. The interval Gly-573 to Pro-631 is triple-helical region 7 (COL7) with 1 imperfection. Collagen-like domains follow at residues Gly-573–Glu-633 and Gly-667–Gly-721. The tract at residues Phe-604–Pro-917 is disordered. Residues Cys-632–Pro-652 form a nonhelical region 7 (NC7) region. Residues Gly-653–Gly-723 are triple-helical region 6 (COL6) with 1 imperfection. The span at Lys-674 to Lys-684 shows a compositional bias: basic and acidic residues. Over residues Asp-686–Pro-702 the composition is skewed to low complexity. Residues Cys-724–Ala-738 are nonhelical region 6 (NC6). The segment at Gly-739–Cys-876 is triple-helical region 5 (COL5) with 3 imperfections. Composition is skewed to low complexity over residues Leu-766–Glu-781, Pro-792–Pro-808, and Pro-826–Pro-846. The Collagen-like 4 domain occupies Gly-788 to Ala-840. Residues Lys-864–Pro-873 are compositionally biased toward basic and acidic residues. The segment at Ser-877 to Ser-887 is nonhelical region 5 (NC5). The Collagen-like 5 domain maps to Gly-888 to Leu-938. Residues Gly-888–Thr-939 form a triple-helical region 4 (COL4) with 2 imperfections region. Pro residues predominate over residues Pro-905–Pro-917. The interval Ala-940–Lys-973 is nonhelical region 4 (NC4). A triple-helical region 3 (COL3) region spans residues Gly-974 to Asp-988. Residues Asn-989–Glu-1011 form a nonhelical region 3 (NC3) region. Disordered stretches follow at residues Arg-1001–Ser-1429 and Met-1468–Lys-1517. The Cell attachment site motif lies at Arg-1006–Asp-1008. Positions Gly-1012–Met-1433 are triple-helical region 2 (COL2) with 2 imperfections. In terms of domain architecture, Collagen-like 6 spans Gly-1018–Gly-1075. Composition is skewed to pro residues over residues Pro-1044 to Phe-1055, Phe-1160 to Phe-1169, and Ser-1199 to Ile-1208. A compositionally biased stretch (basic and acidic residues) spans Leu-1217–Leu-1226. Residues Arg-1227–Asp-1229 carry the Cell attachment site motif. Residues Arg-1271–Gln-1284 are compositionally biased toward low complexity. Pro residues-rich tracts occupy residues Arg-1286–Pro-1302 and Gln-1330–Glu-1342. A compositionally biased stretch (low complexity) spans Asp-1369 to Gln-1378. The span at Gly-1386–Gly-1395 shows a compositional bias: gly residues. Residues Ser-1420–Ser-1429 are compositionally biased toward low complexity. Residues Val-1434–Pro-1472 form a nonhelical region 2 (NC2) region. 2 consecutive Collagen-like domains span residues Pro-1472–Gly-1524 and Ala-1528–Gly-1576. Positions Gly-1473–Cys-1578 are triple-helical region 1 (COL1) with 2 imperfections. The segment at Asn-1579–Gly-1604 is nonhelical region 1 (NC1).

The protein belongs to the fibril-associated collagens with interrupted helices (FACIT) family. As to quaternary structure, homotrimer. Interacts with FBN1, fibronectin and integrins ITGA1/ITGB1 and ITGA2/ITGB1. Integrin ITGA1/ITGB1 binds to a unique site within COL16A1 located close to its C-terminal end between collagenous domains COL1-COL3. Prolines at the third position of the tripeptide repeating unit (G-X-Y) are hydroxylated in some or all of the chains. In terms of processing, glycosylated. As to expression, in papillary dermis, is a component of specialized fibrillin-1-containing microfibrils, whereas in territorial cartilage matrix, it is localized to a discrete population of thin, weakly banded collagen fibrils in association with other collagens (at protein level). In the placenta, where it is found in the amnion, a membranous tissue lining the amniotic cavity. Within the amnion, it is found in an acellular, relatively dense layer of a complex network of reticular fibers. Also located to a fibroblast layer beneath this dense layer. Exists in tissues in association with other types of collagen.

The protein resides in the secreted. It is found in the extracellular space. The protein localises to the extracellular matrix. In terms of biological role, involved in mediating cell attachment and inducing integrin-mediated cellular reactions, such as cell spreading and alterations in cell morphology. The protein is Collagen alpha-1(XVI) chain (COL16A1) of Homo sapiens (Human).